The sequence spans 738 residues: 1,4-alpha-glucan branching enzyme GlgB (738 aa).

The Nucleophile role is filled by Asp399. Catalysis depends on Glu452, which acts as the Proton donor.

This sequence belongs to the glycosyl hydrolase 13 family. GlgB subfamily. In terms of assembly, monomer.

It catalyses the reaction Transfers a segment of a (1-&gt;4)-alpha-D-glucan chain to a primary hydroxy group in a similar glucan chain.. It participates in glycan biosynthesis; glycogen biosynthesis. Its function is as follows. Catalyzes the formation of the alpha-1,6-glucosidic linkages in glycogen by scission of a 1,4-alpha-linked oligosaccharide from growing alpha-1,4-glucan chains and the subsequent attachment of the oligosaccharide to the alpha-1,6 position. The sequence is that of 1,4-alpha-glucan branching enzyme GlgB from Chlamydia trachomatis serovar A (strain ATCC VR-571B / DSM 19440 / HAR-13).